The sequence spans 261 residues: Indole-3-glycerol phosphate synthase (261 aa).

This sequence belongs to the TrpC family.

It catalyses the reaction 1-(2-carboxyphenylamino)-1-deoxy-D-ribulose 5-phosphate + H(+) = (1S,2R)-1-C-(indol-3-yl)glycerol 3-phosphate + CO2 + H2O. It participates in amino-acid biosynthesis; L-tryptophan biosynthesis; L-tryptophan from chorismate: step 4/5. This Campylobacter concisus (strain 13826) protein is Indole-3-glycerol phosphate synthase.